The chain runs to 1517 residues: uncharacterized protein (1517 aa).

Residues 1–13 (MNQFPNQPGNFGQ) are compositionally biased toward polar residues. The interval 1-26 (MNQFPNQPGNFGQNYYKPVQGSIPAN) is disordered. 3 N-linked (GlcNAc...) asparagine glycosylation sites follow: N35, N40, and N76. The next 5 membrane-spanning stretches (helical) occupy residues 231–251 (AIDF…AVPI), 397–417 (AIGL…TVWC), 510–530 (FVPL…KDWI), 612–632 (PNIV…FFAL), and 720–740 (VFDC…VVLL). N-linked (GlcNAc...) asparagine glycosylation occurs at N917. Transmembrane regions (helical) follow at residues 956–976 (FVYA…VPPL), 985–1005 (VPAF…VNSE), 1051–1071 (VKLD…AFWS), and 1114–1134 (GIGF…TYLL). An N-linked (GlcNAc...) asparagine glycan is attached at N1178. A helical membrane pass occupies residues 1261–1281 (PYALPLLDSGMVPVSTQLAIV). N-linked (GlcNAc...) asparagine glycosylation occurs at N1321. 2 consecutive transmembrane segments (helical) span residues 1353–1373 (APVV…TFEV) and 1408–1428 (VVVV…PVVI).

It to S.pombe SpAC22F3.04.

The protein localises to the membrane. This is an uncharacterized protein from Schizosaccharomyces pombe (strain 972 / ATCC 24843) (Fission yeast).